The chain runs to 156 residues: Endoribonuclease YbeY (156 aa).

The Zn(2+) site is built by H122, H126, and H132.

It belongs to the endoribonuclease YbeY family. The cofactor is Zn(2+).

It localises to the cytoplasm. Its function is as follows. Single strand-specific metallo-endoribonuclease involved in late-stage 70S ribosome quality control and in maturation of the 3' terminus of the 16S rRNA. This chain is Endoribonuclease YbeY, found in Bacillus cereus (strain B4264).